A 261-amino-acid polypeptide reads, in one-letter code: Homeobox protein engrailed-2b (261 aa).

Composition is skewed to basic and acidic residues over residues Met-1 to Asn-21, Gly-53 to Arg-72, and Lys-100 to Thr-116. 3 disordered regions span residues Met-1–Ile-24, Gly-53–Ser-125, and Asp-152–Arg-176. Positions Asp-172–Thr-231 form a DNA-binding region, homeobox.

The protein belongs to the engrailed homeobox family.

It localises to the nucleus. The sequence is that of Homeobox protein engrailed-2b (eng2b) from Danio rerio (Zebrafish).